The sequence spans 387 residues: Succinate--CoA ligase [ADP-forming] subunit beta (387 aa).

The ATP-grasp domain maps to 9 to 245 (KDLLESYGLK…KSQENAKELK (237 aa)). ATP is bound by residues Lys-46, 53-55 (GRG), Glu-100, Tyr-103, and Glu-108. Mg(2+) contacts are provided by Asn-200 and Asp-214. Substrate is bound by residues Asn-265 and 322–324 (GIV).

This sequence belongs to the succinate/malate CoA ligase beta subunit family. In terms of assembly, heterotetramer of two alpha and two beta subunits. Requires Mg(2+) as cofactor.

It carries out the reaction succinate + ATP + CoA = succinyl-CoA + ADP + phosphate. The catalysed reaction is GTP + succinate + CoA = succinyl-CoA + GDP + phosphate. It functions in the pathway carbohydrate metabolism; tricarboxylic acid cycle; succinate from succinyl-CoA (ligase route): step 1/1. Functionally, succinyl-CoA synthetase functions in the citric acid cycle (TCA), coupling the hydrolysis of succinyl-CoA to the synthesis of either ATP or GTP and thus represents the only step of substrate-level phosphorylation in the TCA. The beta subunit provides nucleotide specificity of the enzyme and binds the substrate succinate, while the binding sites for coenzyme A and phosphate are found in the alpha subunit. The sequence is that of Succinate--CoA ligase [ADP-forming] subunit beta from Francisella tularensis subsp. tularensis (strain FSC 198).